The following is a 314-amino-acid chain: MSSTAAFCLLSTLGGYLVTSFLLLKYPALLHQRKKQRFLSRHISHRGGAGENLENTMAAFQHAVTIGTDMLELDCHITKDEQVVVSHDANLKRSTGVNVNVSDLKYCELPPYLCKLDVPFQRACKCEGKDTRIPLLKEVFEAFPETPINIDIKVNNNVLIKKVSELVKQYKREHLTVWGNANSEIVDKCYKENSDIPILFSLQRVLLILGLFFTGLLPFVPIREQFFEIPMPSIILKLKEPHTISKGHKFLIWLSDTLLMRKALFDHLTARGIQVYVWVLNEEYEYKRAFDLGATGVMTDYPTKLKDFLNNFSA.

Residues 1-3 lie on the Extracellular side of the membrane; sequence MSS. The chain crosses the membrane as a helical span at residues 4–24; the sequence is TAAFCLLSTLGGYLVTSFLLL. The Cytoplasmic portion of the chain corresponds to 25–195; sequence KYPALLHQRK…VDKCYKENSD (171 aa). One can recognise a GP-PDE domain in the interval 40–309; the sequence is SRHISHRGGA…DYPTKLKDFL (270 aa). A divalent metal cation is bound by residues Glu-72, Asp-74, and His-87. The chain crosses the membrane as a helical span at residues 196–216; that stretch reads IPILFSLQRVLLILGLFFTGL. The Extracellular portion of the chain corresponds to 217–314; that stretch reads LPFVPIREQF…LKDFLNNFSA (98 aa).

This sequence belongs to the glycerophosphoryl diester phosphodiesterase family. As to expression, widely expressed.

Its subcellular location is the cytoplasm. The protein resides in the membrane. It localises to the perinuclear region. The protein localises to the endoplasmic reticulum. The catalysed reaction is 1-hexadecanoyl-sn-glycero-3-phosphocholine + H2O = 1-hexadecanoyl-sn-glycero-3-phosphate + choline + H(+). It carries out the reaction 1-hexadecanoyl-sn-glycero-3-phosphoethanolamine + H2O = 1-hexadecanoyl-sn-glycero-3-phosphate + ethanolamine + H(+). The enzyme catalyses N-hexadecanoyl-sn-glycero-3-phosphoethanolamine + H2O = N-hexadecanoylethanolamine + sn-glycerol 3-phosphate + H(+). It catalyses the reaction N-(5Z,8Z,11Z,14Z-eicosatetraenoyl)-1-(9Z-octadecenoyl)-sn-glycero-3-phosphoethanolamine + H2O = N-(5Z,8Z,11Z,14Z-eicosatetraenoyl)-ethanolamine + 1-(9Z-octadecenoyl)-sn-glycero-3-phosphate + H(+). The catalysed reaction is N,1-di-(9Z-octadecenoyl)-sn-glycero-3-phosphoethanolamine + H2O = N-(9Z-octadecenoyl) ethanolamine + 1-(9Z-octadecenoyl)-sn-glycero-3-phosphate + H(+). It carries out the reaction N-hexadecanoyl-1-(9Z-octadecenoyl)-sn-glycero-3-phosphoethanolamine + H2O = N-hexadecanoylethanolamine + 1-(9Z-octadecenoyl)-sn-glycero-3-phosphate + H(+). The enzyme catalyses a 1-O-alkyl-sn-glycero-3-phosphocholine + H2O = a 1-O-alkyl-sn-glycero-3-phosphate + choline + H(+). It catalyses the reaction 1-O-hexadecyl-sn-glycero-3-phosphocholine + H2O = 1-O-hexadecyl-sn-glycero-3-phosphate + choline + H(+). The catalysed reaction is 1-(9Z-octadecenoyl)-sn-glycero-3-phosphocholine + H2O = 1-(9Z-octadecenoyl)-sn-glycero-3-phosphate + choline + H(+). It carries out the reaction N,1-dihexadecanoyl-sn-glycero-3-phosphoethanolamine + H2O = N-hexadecanoylethanolamine + 1-hexadecanoyl-sn-glycero-3-phosphate + H(+). The enzyme catalyses 1-O-(1Z-octadecenyl)-sn-glycero-3-phospho-(N-5Z,8Z,11Z,14Z-eicosatetraenoyl)-ethanolamine + H2O = 1-O-(1Z-octadecenyl)-sn-glycero-3-phosphate + N-(5Z,8Z,11Z,14Z-eicosatetraenoyl)-ethanolamine + H(+). It catalyses the reaction 1-O-(1Z-octadecenyl)-sn-glycero-3-phospho-(N-9Z-octadecenoyl)-ethanolamine + H2O = 1-O-(1Z-octadecenyl)-sn-glycero-3-phosphate + N-(9Z-octadecenoyl) ethanolamine + H(+). The catalysed reaction is 1-O-(1Z-octadecenyl)-sn-glycero-3-phospho-N-hexadecanoyl-ethanolamine + H2O = 1-O-(1Z-octadecenyl)-sn-glycero-3-phosphate + N-hexadecanoylethanolamine + H(+). Lysophospholipase D activity is increased by magnesium and manganese and inhibited by calcium in a concentration dependent manner. Loss of lysophospholipase D activity by addition of EDTA. In terms of biological role, hydrolyzes lysoglycerophospholipids to produce lysophosphatidic acid (LPA) and the corresponding amines. Shows a preference for 1-O-alkyl-sn-glycero-3-phosphocholine (lyso-PAF), lysophosphatidylethanolamine (lyso-PE) and lysophosphatidylcholine (lyso-PC). May be involved in bioactive N-acylethanolamine biosynthesis from both N-acyl-lysoplasmenylethanolamin (N-acyl-lysoPlsEt) and N-acyl-lysophosphatidylethanolamin (N-acyl-lysoPE). In addition, hydrolyzes glycerophospho-N-acylethanolamine to N-acylethanolamine. Does not display glycerophosphodiester phosphodiesterase activity, since it cannot hydrolyze either glycerophosphoinositol or glycerophosphocholine. The chain is Lysophospholipase D GDPD1 from Mus musculus (Mouse).